Consider the following 660-residue polypeptide: DNA ligase (660 aa).

NAD(+) contacts are provided by residues 31–35 (DKEYD), 79–80 (SL), and glutamate 111. Lysine 113 (N6-AMP-lysine intermediate) is an active-site residue. Residues arginine 134, glutamate 168, lysine 280, and lysine 304 each coordinate NAD(+). Residues cysteine 397, cysteine 400, cysteine 413, and cysteine 419 each coordinate Zn(2+). One can recognise a BRCT domain in the interval 577–660 (RQESIFSGKT…LDEAAFEALL (84 aa)).

This sequence belongs to the NAD-dependent DNA ligase family. LigA subfamily. Mg(2+) is required as a cofactor. It depends on Mn(2+) as a cofactor.

It catalyses the reaction NAD(+) + (deoxyribonucleotide)n-3'-hydroxyl + 5'-phospho-(deoxyribonucleotide)m = (deoxyribonucleotide)n+m + AMP + beta-nicotinamide D-nucleotide.. In terms of biological role, DNA ligase that catalyzes the formation of phosphodiester linkages between 5'-phosphoryl and 3'-hydroxyl groups in double-stranded DNA using NAD as a coenzyme and as the energy source for the reaction. It is essential for DNA replication and repair of damaged DNA. This Alkaliphilus metalliredigens (strain QYMF) protein is DNA ligase.